We begin with the raw amino-acid sequence, 328 residues long: YDG domain-containing protein At5g47150 (328 aa).

The region spanning 176-320 (GSVPGINIGD…KSVYKFKLCR (145 aa)) is the YDG domain.

It is found in the nucleus. The sequence is that of YDG domain-containing protein At5g47150 from Arabidopsis thaliana (Mouse-ear cress).